The sequence spans 414 residues: Esterase FrsA (414 aa).

It belongs to the FrsA family.

The catalysed reaction is a carboxylic ester + H2O = an alcohol + a carboxylate + H(+). Catalyzes the hydrolysis of esters. This Escherichia coli (strain K12 / DH10B) protein is Esterase FrsA.